The primary structure comprises 1934 residues: Myosin-7 (1934 aa).

The Myosin N-terminal SH3-like domain maps to aspartate 31 to proline 80. The Myosin motor domain maps to aspartate 84–aspartate 777. Residue lysine 128 is modified to N6,N6,N6-trimethyllysine. ATP is bound at residue glycine 177–threonine 184. Threonine 377 carries the phosphothreonine modification. Actin-binding stretches follow at residues leucine 654–glutamate 676 and lysine 756–glycine 770. Residues leucine 780–serine 809 form the IQ domain. Positions leucine 839–glutamate 1934 form a coiled coil. Phosphoserine occurs at positions 1136 and 1268. Threonine 1281 carries the post-translational modification Phosphothreonine. Tyrosine 1307 carries the post-translational modification Phosphotyrosine. Threonine 1308 is modified (phosphothreonine). Serine 1509 is subject to Phosphoserine. Residue threonine 1512 is modified to Phosphothreonine. The tract at residues serine 1914–glutamate 1934 is disordered. Positions lysine 1922–glutamate 1934 are enriched in basic and acidic residues.

This sequence belongs to the TRAFAC class myosin-kinesin ATPase superfamily. Myosin family. In terms of assembly, muscle myosin is a hexameric protein that consists of 2 heavy chain subunits (MHC), 2 alkali light chain subunits (MLC) and 2 regulatory light chain subunits (MLC-2). Interacts with ECPAS. Interacts (via C-terminus) with LRRC39.

It is found in the cytoplasm. It localises to the myofibril. The protein resides in the sarcomere. Its function is as follows. Myosins are actin-based motor molecules with ATPase activity essential for muscle contraction. Forms regular bipolar thick filaments that, together with actin thin filaments, constitute the fundamental contractile unit of skeletal and cardiac muscle. This is Myosin-7 (MYH7) from Mesocricetus auratus (Golden hamster).